The following is a 261-amino-acid chain: Small ribosomal subunit protein uS2 (261 aa).

Position 2 is an N-acetylserine (S2). Residues 214–261 (ATEDIKTDDVEEAPAADAETEWTGETEEVDWAESGATPAAEEAAASNW) are disordered. Acidic residues predominate over residues 222–244 (DVEEAPAADAETEWTGETEEVDW). A compositionally biased stretch (low complexity) spans 245 to 261 (AESGATPAAEEAAASNW).

The protein belongs to the universal ribosomal protein uS2 family. In terms of assembly, component of the small ribosomal subunit. Mature ribosomes consist of a small (40S) and a large (60S) subunit. The 40S subunit contains about 33 different proteins and 1 molecule of RNA (18S). The 60S subunit contains about 49 different proteins and 3 molecules of RNA (25S, 5.8S and 5S). Interacts with RPS21.

The protein localises to the cytoplasm. Its function is as follows. Required for the assembly and/or stability of the 40S ribosomal subunit. Required for the processing of the 20S rRNA-precursor to mature 18S rRNA in a late step of the maturation of 40S ribosomal subunits. This is Small ribosomal subunit protein uS2 from Debaryomyces hansenii (strain ATCC 36239 / CBS 767 / BCRC 21394 / JCM 1990 / NBRC 0083 / IGC 2968) (Yeast).